A 348-amino-acid polypeptide reads, in one-letter code: Dihydroorotase (348 aa).

Residues H17 and H19 each contribute to the Zn(2+) site. Residues 19-21 (HLR) and N45 contribute to the substrate site. Zn(2+)-binding residues include K103, H140, and H178. K103 carries the post-translational modification N6-carboxylysine. A substrate-binding site is contributed by H140. L223 serves as a coordination point for substrate. Residue D251 participates in Zn(2+) binding. D251 is a catalytic residue. The substrate site is built by H255 and A267.

It belongs to the metallo-dependent hydrolases superfamily. DHOase family. Class II DHOase subfamily. Homodimer. Zn(2+) is required as a cofactor.

It carries out the reaction (S)-dihydroorotate + H2O = N-carbamoyl-L-aspartate + H(+). It participates in pyrimidine metabolism; UMP biosynthesis via de novo pathway; (S)-dihydroorotate from bicarbonate: step 3/3. In terms of biological role, catalyzes the reversible cyclization of carbamoyl aspartate to dihydroorotate. The sequence is that of Dihydroorotase from Salmonella heidelberg (strain SL476).